The sequence spans 420 residues: Glycogen synthase kinase-3 beta (420 aa).

Over residues Met-1–Ala-22 the composition is skewed to polar residues. The disordered stretch occupies residues Met-1–Glu-53. A Phosphoserine; by PKB/AKT1, RPS6KA3 and SGK3 modification is found at Ser-9. Cys-14 carries S-palmitoyl cysteine lipidation. Residues Tyr-56 to Phe-340 form the Protein kinase domain. Residues Ile-62 to Val-70 and Lys-85 each bind ATP. Asp-181 (proton acceptor) is an active-site residue. Tyr-216 carries the post-translational modification Phosphotyrosine. Positions Gln-385–Thr-420 are disordered. 2 stretches are compositionally biased toward low complexity: residues Ala-386–Asn-401 and Asn-409–Thr-420. Ser-389 bears the Phosphoserine mark.

It belongs to the protein kinase superfamily. CMGC Ser/Thr protein kinase family. GSK-3 subfamily. In terms of assembly, monomer. Interacts with DAB2IP (via C2 domain); the interaction stimulates GSK3B kinase activation. Interacts (via C2 domain) with PPP2CA. Interacts with CABYR, MMP2, MUC1, NIN and PRUNE1. Interacts with AXIN1; the interaction mediates hyperphosphorylation of CTNNB1 leading to its ubiquitination and destruction. Interacts with and phosphorylates SNAI1. Interacts with DNM1L (via a C-terminal domain). Interacts with ARRB2. Interacts with DISC1. Found in a complex composed of MACF1, APC, AXIN1, CTNNB1 and GSK3B. Interacts with SGK3. Interacts with the CLOCK-BMAL1 heterodimer. Interacts with ZBED3. Interacts with the BMAL1. The complex composed, at least, of APC, CTNNB1 and GSK3B interacts with JPT1; the interaction requires the inactive form of GSK3B (phosphorylated at 'Ser-9'). Forms a complex composed of PRKAR2A or PRKAR2B, GSK3B and GSKIP through GSKIP interaction; facilitates PKA-induced phosphorylation and regulates GSK3B activity. Interacts with GSKIP. Interacts with GID8. Interacts with PIWIL2. Interacts with LMBR1L. Interacts with DDX3X. Interacts with BIRC2. Interacts with TNFRSF10B; TNFRSF10B stimulation inhibits GSK3B kinase activity. Found in a complex with SLC39A6, SLC39A10 and with GSK3B that controls NCAM1 phosphorylation. Interacts with PKP3 (via ARM repeats); the interaction may be involved in PKP3 protein degradation. In terms of processing, phosphorylated by AKT1 and ILK1. Upon insulin-mediated signaling, the activated PKB/AKT1 protein kinase phosphorylates and deactivates GSK3B, resulting in the dephosphorylation and activation of GYS1. Activated by phosphorylation at Tyr-216. Phosphorylation of Ser-9 in the hippocampus peaks at CT0, whereas in the liver it peaks at CT12. Inactivated by phosphorylation at Ser-9. Phosphorylated in a circadian manner in the hippocampus. Post-translationally, mono-ADP-ribosylation by PARP10 negatively regulates kinase activity. Palmitoylated. Palmitoylation by ZDHHC4 prevents AKT1-mediated phosphorylation. Expressed in the liver (at protein level).

Its subcellular location is the cytoplasm. The protein localises to the nucleus. It is found in the cell membrane. It carries out the reaction L-seryl-[tau protein] + ATP = O-phospho-L-seryl-[tau protein] + ADP + H(+). The catalysed reaction is L-threonyl-[tau protein] + ATP = O-phospho-L-threonyl-[tau protein] + ADP + H(+). The enzyme catalyses L-seryl-[protein] + ATP = O-phospho-L-seryl-[protein] + ADP + H(+). It catalyses the reaction L-threonyl-[protein] + ATP = O-phospho-L-threonyl-[protein] + ADP + H(+). Its activity is regulated as follows. Activated by phosphorylation at Tyr-216. In response to insulin, inhibited by phosphorylation at Ser-9 by PKB/AKT1 and RPS6KA3; phosphorylation at this site causes a conformational change, preventing access of substrates to the active site. Inhibited by IL22 treatment which also triggers phosphorylation at Ser-9, promoting inactivation. Inhibited by lithium. Constitutively active protein kinase that acts as a negative regulator in the hormonal control of glucose homeostasis, Wnt signaling and regulation of transcription factors and microtubules, by phosphorylating and inactivating glycogen synthase (GYS1 or GYS2), EIF2B, CTNNB1/beta-catenin, APC, AXIN1, DPYSL2/CRMP2, JUN, NFATC1/NFATC, MAPT/TAU and MACF1. Requires primed phosphorylation of the majority of its substrates. In skeletal muscle, contributes to insulin regulation of glycogen synthesis by phosphorylating and inhibiting GYS1 activity and hence glycogen synthesis. May also mediate the development of insulin resistance by regulating activation of transcription factors. Regulates protein synthesis by controlling the activity of initiation factor 2B (EIF2BE/EIF2B5) in the same manner as glycogen synthase. In Wnt signaling, GSK3B forms a multimeric complex with APC, AXIN1 and CTNNB1/beta-catenin and phosphorylates the N-terminus of CTNNB1 leading to its degradation mediated by ubiquitin/proteasomes. Phosphorylates JUN at sites proximal to its DNA-binding domain, thereby reducing its affinity for DNA. Phosphorylates NFATC1/NFATC on conserved serine residues promoting NFATC1/NFATC nuclear export, shutting off NFATC1/NFATC gene regulation, and thereby opposing the action of calcineurin. Phosphorylates MAPT/TAU on 'Thr-548', decreasing significantly MAPT/TAU ability to bind and stabilize microtubules. MAPT/TAU is the principal component of neurofibrillary tangles in Alzheimer disease. Plays an important role in ERBB2-dependent stabilization of microtubules at the cell cortex. Phosphorylates MACF1, inhibiting its binding to microtubules which is critical for its role in bulge stem cell migration and skin wound repair. Probably regulates NF-kappa-B (NFKB1) at the transcriptional level and is required for the NF-kappa-B-mediated anti-apoptotic response to TNF-alpha (TNF/TNFA). Negatively regulates replication in pancreatic beta-cells, resulting in apoptosis, loss of beta-cells and diabetes. Through phosphorylation of the anti-apoptotic protein MCL1, may control cell apoptosis in response to growth factors deprivation. Phosphorylates MUC1 in breast cancer cells, decreasing the interaction of MUC1 with CTNNB1/beta-catenin. Is necessary for the establishment of neuronal polarity and axon outgrowth. Phosphorylates MARK2, leading to inhibition of its activity. Phosphorylates SIK1 at 'Thr-182', leading to sustainment of its activity. Phosphorylates ZC3HAV1 which enhances its antiviral activity. Phosphorylates SNAI1, leading to its ubiquitination and proteasomal degradation. Phosphorylates SFPQ at 'Thr-687' upon T-cell activation. Phosphorylates NR1D1 st 'Ser-55' and 'Ser-59' and stabilizes it by protecting it from proteasomal degradation. Regulates the circadian clock via phosphorylation of the major clock components including BMAL1, CLOCK and PER2. Phosphorylates CLOCK AT 'Ser-427' and targets it for proteasomal degradation. Phosphorylates BMAL1 at 'Ser-17' and 'Ser-21' and primes it for ubiquitination and proteasomal degradation. Phosphorylates FBXL2 at 'Thr-404' and primes it for ubiquitination by the SCF(FBXO3) complex and proteasomal degradation. Phosphorylates OGT at 'Ser-3' or 'Ser-4' which positively regulates its activity. Phosphorylates MYCN in neuroblastoma cells which may promote its degradation. Regulates the circadian rhythmicity of hippocampal long-term potentiation and BMAL1 and PER2 expression. Acts as a regulator of autophagy by mediating phosphorylation of KAT5/TIP60 under starvation conditions, activating KAT5/TIP60 acetyltransferase activity and promoting acetylation of key autophagy regulators, such as ULK1 and RUBCNL/Pacer. Negatively regulates extrinsic apoptotic signaling pathway via death domain receptors. Promotes the formation of an anti-apoptotic complex, made of DDX3X, BRIC2 and GSK3B, at death receptors, including TNFRSF10B. The anti-apoptotic function is most effective with weak apoptotic signals and can be overcome by stronger stimulation. Phosphorylates E2F1, promoting the interaction between E2F1 and USP11, stabilizing E2F1 and promoting its activity. Phosphorylates mTORC2 complex component RICTOR at 'Ser-1235' in response to endoplasmic stress, inhibiting mTORC2. Phosphorylates FXR1, promoting FXR1 ubiquitination by the SCF(FBXO4) complex and FXR1 degradation by the proteasome. Phosphorylates interleukin-22 receptor subunit IL22RA1, preventing its proteasomal degradation. The sequence is that of Glycogen synthase kinase-3 beta from Mus musculus (Mouse).